Reading from the N-terminus, the 63-residue chain is Light-harvesting protein B-800/850 alpha chain (63 aa).

Over 1–14 the chain is Cytoplasmic; the sequence is MNNAKMWLVVKPTV. A helical membrane pass occupies residues 15–35; it reads GIPLFLVACAIASFLVHLMLV. Histidine 31 lines the a bacteriochlorophyll pocket. Topologically, residues 36 to 63 are periplasmic; sequence LTTGWMGDYYSGSFEAASLVSNATTLLS.

The protein belongs to the antenna complex alpha subunit family. The core complex is formed by different alpha and beta chains, binding bacteriochlorophyll molecules, and arranged most probably in tetrameric structures disposed around the reaction center. The non-pigmented gamma chains may constitute additional components.

Its subcellular location is the cell inner membrane. Its function is as follows. Antenna complexes are light-harvesting systems, which transfer the excitation energy to the reaction centers. In Rhodovulum sulfidophilum (Rhodobacter sulfidophilus), this protein is Light-harvesting protein B-800/850 alpha chain (pucA).